Consider the following 154-residue polypeptide: 17.0 kDa class II heat shock protein (154 aa).

The 116-residue stretch at 39 to 154 folds into the sHSP domain; it reads DARAMAATPA…KPKTIEIKVA (116 aa).

This sequence belongs to the small heat shock protein (HSP20) family.

It localises to the cytoplasm. The chain is 17.0 kDa class II heat shock protein (HSP18) from Zea mays (Maize).